Here is a 485-residue protein sequence, read N- to C-terminus: NADH-quinone oxidoreductase subunit N (485 aa).

The next 14 membrane-spanning stretches (helical) occupy residues Leu-8–Ile-28, Phe-35–Val-55, Leu-75–Leu-95, Phe-105–Leu-125, Ser-127–Phe-147, Tyr-159–Ala-179, Leu-203–Phe-223, Pro-235–Met-255, Val-271–Gln-291, Leu-297–Lys-317, Val-326–Leu-346, Ala-374–Gly-394, Trp-408–Arg-427, and Val-455–Ile-475.

It belongs to the complex I subunit 2 family. As to quaternary structure, NDH-1 is composed of 13 different subunits. Subunits NuoA, H, J, K, L, M, N constitute the membrane sector of the complex.

It localises to the cell inner membrane. The enzyme catalyses a quinone + NADH + 5 H(+)(in) = a quinol + NAD(+) + 4 H(+)(out). Functionally, NDH-1 shuttles electrons from NADH, via FMN and iron-sulfur (Fe-S) centers, to quinones in the respiratory chain. The immediate electron acceptor for the enzyme in this species is believed to be ubiquinone. Couples the redox reaction to proton translocation (for every two electrons transferred, four hydrogen ions are translocated across the cytoplasmic membrane), and thus conserves the redox energy in a proton gradient. The chain is NADH-quinone oxidoreductase subunit N from Cronobacter sakazakii (strain ATCC BAA-894) (Enterobacter sakazakii).